Reading from the N-terminus, the 111-residue chain is uncharacterized protein (111 aa).

The protein belongs to the asfivirus E111R family.

This is an uncharacterized protein from Ornithodoros (relapsing fever ticks).